Here is a 1304-residue protein sequence, read N- to C-terminus: DNA-directed RNA polymerase subunit beta' (1304 aa).

The disordered stretch occupies residues 1–23 (MSEKGRFSAGLSRQAADGNKADA). Zn(2+) is bound by residues Cys-241, Cys-315, Cys-322, and Cys-325. Over residues 1256–1268 (AAEPEPDEEEEEP) the composition is skewed to acidic residues. The disordered stretch occupies residues 1256–1304 (AAEPEPDEEEEEPAVLPELPPRLILEDDQLIDDSTPAFDELEEDDDEEE). Residues 1269–1278 (AVLPELPPRL) are compositionally biased toward low complexity. Positions 1294-1304 (DELEEDDDEEE) are enriched in acidic residues.

This sequence belongs to the RNA polymerase beta' chain family. RpoC2 subfamily. In terms of assembly, in cyanobacteria the RNAP catalytic core is composed of 2 alpha, 1 beta, 1 beta', 1 gamma and 1 omega subunit. When a sigma factor is associated with the core the holoenzyme is formed, which can initiate transcription. The cofactor is Zn(2+).

The catalysed reaction is RNA(n) + a ribonucleoside 5'-triphosphate = RNA(n+1) + diphosphate. Functionally, DNA-dependent RNA polymerase catalyzes the transcription of DNA into RNA using the four ribonucleoside triphosphates as substrates. The protein is DNA-directed RNA polymerase subunit beta' of Synechococcus sp. (strain JA-2-3B'a(2-13)) (Cyanobacteria bacterium Yellowstone B-Prime).